The following is a 69-amino-acid chain: Large ribosomal subunit protein eL38 (69 aa).

This sequence belongs to the eukaryotic ribosomal protein eL38 family.

The protein is Large ribosomal subunit protein eL38 (RPL38) of Solanum lycopersicum (Tomato).